The chain runs to 188 residues: Large ribosomal subunit protein bL32m (188 aa).

Positions 110, 113, 123, and 126 each coordinate Zn(2+). The segment at 162-188 (GETPSEHDQGKRIIERERKRPSWFTQN) is disordered. Residues 165-181 (PSEHDQGKRIIERERKR) show a composition bias toward basic and acidic residues.

The protein belongs to the bacterial ribosomal protein bL32 family. Component of the mitochondrial ribosome large subunit (39S) which comprises a 16S rRNA and about 50 distinct proteins. Post-translationally, MRPL32 precursor is processed by the m-AAA protease (composed of AFG3L2 and SPG7), which cleaves the N-terminal transit peptide. Cleavage by the m-AAA protease takes place prior to assembly into the large subunit, an essential step for mitochondrial ribosome (mitoribosome) assembly. Proper processing by the m-AAA protease is dependent on the zinc-binding region within the tightly folded C-terminal domain of MRPL32: zinc-dependent folding halts degradation initiated from the N-terminus and triggers the release of mature MRPL32.

The protein resides in the mitochondrion. Its function is as follows. Component of the mitochondrial large ribosomal subunit (mt-LSU). The mitochondrial ribosome (mitoribosome) is a large ribonucleoprotein complex responsible for the synthesis of proteins inside mitochondria. This is Large ribosomal subunit protein bL32m (MRPL32) from Bos taurus (Bovine).